The primary structure comprises 239 residues: Probable fimbrial chaperone YehC (239 aa).

An N-terminal signal peptide occupies residues 1–31; that stretch reads MAAIPWRPFNLRGIKMKGLLSLLIFSMVLPA.

The protein belongs to the periplasmic pilus chaperone family.

The protein resides in the periplasm. In terms of biological role, part of the yehABCD fimbrial operon. Could contribute to adhesion to various surfaces in specific environmental niches. The polypeptide is Probable fimbrial chaperone YehC (yehC) (Escherichia coli (strain K12)).